Here is a 378-residue protein sequence, read N- to C-terminus: Dual-specificity RNA methyltransferase RlmN (378 aa).

Residue glutamate 96 is the Proton acceptor of the active site. The Radical SAM core domain occupies 102–342 (QGGRGTLCVS…VRTTRGDDID (241 aa)). A disulfide bond links cysteine 109 and cysteine 345. Positions 116, 120, and 123 each coordinate [4Fe-4S] cluster. Residues 170–171 (GE), serine 202, 224–226 (SLH), and asparagine 302 contribute to the S-adenosyl-L-methionine site. Catalysis depends on cysteine 345, which acts as the S-methylcysteine intermediate.

It belongs to the radical SAM superfamily. RlmN family. It depends on [4Fe-4S] cluster as a cofactor.

It is found in the cytoplasm. The enzyme catalyses adenosine(2503) in 23S rRNA + 2 reduced [2Fe-2S]-[ferredoxin] + 2 S-adenosyl-L-methionine = 2-methyladenosine(2503) in 23S rRNA + 5'-deoxyadenosine + L-methionine + 2 oxidized [2Fe-2S]-[ferredoxin] + S-adenosyl-L-homocysteine. It carries out the reaction adenosine(37) in tRNA + 2 reduced [2Fe-2S]-[ferredoxin] + 2 S-adenosyl-L-methionine = 2-methyladenosine(37) in tRNA + 5'-deoxyadenosine + L-methionine + 2 oxidized [2Fe-2S]-[ferredoxin] + S-adenosyl-L-homocysteine. Specifically methylates position 2 of adenine 2503 in 23S rRNA and position 2 of adenine 37 in tRNAs. m2A2503 modification seems to play a crucial role in the proofreading step occurring at the peptidyl transferase center and thus would serve to optimize ribosomal fidelity. This chain is Dual-specificity RNA methyltransferase RlmN, found in Pseudomonas paraeruginosa (strain DSM 24068 / PA7) (Pseudomonas aeruginosa (strain PA7)).